The sequence spans 704 residues: MFLFSDGLQSINNNNRRKRIVKNAYIPSRGIRKIPHLSTLLPEFHICKDGKEAEAVVGWGLRPTTHKARAFAAEHQLPFIALEDGFLRSLGLGVAGYPPYSIVYDDIGIYYDTTRPSRLEQLILAADTMPSETLAQAQQAMDFILQHHLSKYNHAPELSDDHPLRSPSKPETVLIIDQTFGDMAIQYGGADASTFELMFQTALNENPQADIWVKTHPDVLCGKKQGYLTQLAQQHRVHLLAEDINPISLLQNVDKVYCVTSQMGFEALLCGKPLTTFGLPWYAGWGVSDDRHPEINRLVQTQRRATRNLLQLFAAAYLQYSRYLNPNTGEAGSLFDVIDYLATVKRKNDKLRGELYCVGMSLWKRAVAKPFFNVPSCRLKFISSTQKLARVKLSDDARILAWGNGKEAIVRFAEQHHIPLLRMEDGFIRSVGLGSNLVPPLSLVTDDMSIYFNAETPSRLEYILQNQNFDDQDFQTALKLQKMLTENHISKYNVGSSDFTAPSTDKTVILVPGQVEDDASIRYGSPQIYRNLDLLRTVRERNPNAYIIYKPHPDVVSGNRIGHISPEDAARYADQTAEQADILTCLQYADEIHTMTSLTGFEALLRGKKVSCYGLPFYAGWGLTQDLLPIPRRSRRLELWQLIAGTLIHYPDYIHPETHQAINAETAAQILIRQKNMQKNNNGLHRGCFAKKLGKIKQLYRSFK.

The protein resides in the cell inner membrane. Involved in the phospholipid modification of the capsular polysaccharide, a strong requirement for its translocation to the cell surface. The chain is Capsule polysaccharide modification protein LipA (lipA) from Neisseria meningitidis serogroup B (strain ATCC BAA-335 / MC58).